An 82-amino-acid polypeptide reads, in one-letter code: Acyl carrier protein (82 aa).

Residues 3–77 (SSIFDKVQNI…QAIEFIQHAI (75 aa)) enclose the Carrier domain. An O-(pantetheine 4'-phosphoryl)serine modification is found at Ser-37.

This sequence belongs to the acyl carrier protein (ACP) family. In terms of processing, 4'-phosphopantetheine is transferred from CoA to a specific serine of apo-ACP by AcpS. This modification is essential for activity because fatty acids are bound in thioester linkage to the sulfhydryl of the prosthetic group.

It is found in the plastid. Its subcellular location is the chloroplast. It functions in the pathway lipid metabolism; fatty acid biosynthesis. Its function is as follows. Carrier of the growing fatty acid chain in fatty acid biosynthesis. This Gracilaria tenuistipitata var. liui (Red alga) protein is Acyl carrier protein.